A 959-amino-acid chain; its full sequence is MSTPTGLPALNGDVLSAINDMIGRVIIINTTDKKRYSGVLGAVSQDFDFGMQCVVEITKENENNLLRTESECRDKMVFHYSDIVDFAYVTQEIKKQHAVSKFVTDRQYHGDTPIEGEELQEWNGGEEDGLGGSIEDDVVVAGGQTAARRSNNHNNGTGWSVNDMFAANEKMNVVSTFKEDLTQYTTVEVVGTDEDRARAERLAREIESNSSSKFMANLENDDDERDLDKITRQEDFENGNGRKRNNNSFNQQQQQRRNPNIAPNGQPVNRRAEGLRGDRRNSGSSSANNSRYGAPAAAQQNYSQNQQQQQGQKGYRRQNEENDWQMAKGKGQNQGHDHSFRQQQKQMLDPRPNNNVKPADDKAQSATTATAAAGGSRVTDLKNWGNEFSIATAPKDQAPAVPAGNSGSAWNRGPPSSLVAKGSSNESTPPPTTNGEEAETKKEEAPSTSVDVAAAPVQNVQNDAEKHQEDDNVSVTSENDSVITSKSSSFKFNINAPEFKPRVAPATPTATTPVQNEYHPQQQPHPAMMAPQQGPPAPGMGMVPPHMGGPQNQGQPPMMMWQQTGQQQQGGGGYPQNHQFPIQHVPMQGVPGQMYGPGAATPVTVAQQPNQQHQVPTSAAGGQNHQLRDGEYREKQPLYMPYGPPQMVPVTSQQFYHSQYQGQMQQAAPYQMKMMPQQAPQGAYQQRYQQPQVYMMPPQGQQQQPRYQGPPPPQQQQQQQPQQQQFSGEQSRPQSHPNSQPTTPGPRGELPKMSGAPQNGNMQAESSSNASHSGSTSSQSGQRSGSPPGAVPPPPPPQQQHQQQQHPPHHAPPHVGAPPPQMMQQQQQHIQQYMVMQGPHQMHPQIPNYYQQPQQVFYPMIMPQQMPMQQNQHPQQSLMGERSDQGFPTSGYFDYRTMPNYQQQQQQQQQQMHRQNSLPQQFQGNQGVNPSGQQSGPPPPPPPSQQGTPRDQQHSQSPP.

Residues D13 to E92 form the Sm domain. Disordered regions lie at residues A203–V378, T392–T484, P501–M528, P697–Q831, and P867–P959. A compositionally biased stretch (basic and acidic residues) spans D226 to D235. Low complexity predominate over residues N246–N260. Basic and acidic residues predominate over residues R270–N281. A compositionally biased stretch (low complexity) spans S282–K313. Composition is skewed to polar residues over residues R341–V356 and V473–T484. Low complexity-rich tracts occupy residues A504–M528, P697–Y707, and Q715–Q725. Polar residues-rich tracts occupy residues F726–T742 and A756–E765. The segment covering S766–P788 has biased composition (low complexity). Residues G789–Q798 are compositionally biased toward pro residues. 3 stretches are compositionally biased toward low complexity: residues M822–Q831, P867–Q876, and Q902–Q911. Residues M912–F922 show a composition bias toward polar residues. Low complexity predominate over residues Q923–S935. Positions T948 to P959 are enriched in polar residues.

Belongs to the ataxin-2 family. In terms of assembly, interacts (via C-terminus) with szy-20 (via C-terminus); the interaction is RNA independent. Interacts with pab-1. Interacts with gdi-1. Expressed in the central nervous system, dorsal and ventral nerve cord, intestinal lining and body-wall muscle. Expressed in the gonad.

The protein resides in the cytoplasm. The protein localises to the nucleus. In terms of biological role, probable RNA-binding protein that negatively regulates the translation of targets. Functions with RNA-binding protein szy-20 to ensure embryonic cell division, and to this end, plays a role in the regulation of centrosome assembly, position and size, and in astral microtubule outgrowth and nucleation. Required for gonad development, germ cell proliferation and for the production of oocytes. Regulates whole body growth and fat accumulation in response to food availability, and this may be through the mTOR pathway, upstream of daf-15 and rheb-1. The sequence is that of Ataxin-2 homolog from Caenorhabditis elegans.